We begin with the raw amino-acid sequence, 678 residues long: Glycine--tRNA ligase beta subunit (678 aa).

Belongs to the class-II aminoacyl-tRNA synthetase family. In terms of assembly, tetramer of two alpha and two beta subunits.

It localises to the cytoplasm. The enzyme catalyses tRNA(Gly) + glycine + ATP = glycyl-tRNA(Gly) + AMP + diphosphate. The chain is Glycine--tRNA ligase beta subunit from Streptococcus thermophilus (strain ATCC BAA-491 / LMD-9).